The primary structure comprises 547 residues: uncharacterized protein (547 aa).

Residues 1 to 21 (MVKKHQNSKMGNTNHFGHLKS) are Extracellular-facing. The chain crosses the membrane as a helical span at residues 22–42 (FVGGNVVALGAGTPYLFSFYA). Residues 43–58 (PQLLSKCHIPVSASSK) lie on the Cytoplasmic side of the membrane. Residues 59-79 (LSFSLTIGSSLMGILAGIVVD) traverse the membrane as a helical segment. Residues 80–83 (RSPK) lie on the Extracellular side of the membrane. A helical membrane pass occupies residues 84–104 (LSCLIGSMCVFIAYLILNLCY). Topologically, residues 105 to 110 (KHEWSS) are cytoplasmic. The chain crosses the membrane as a helical span at residues 111–131 (TFLISLSLVLIGYGSVSGFYA). Over 132 to 144 (SVKCANTNFPQHR) the chain is Extracellular. A helical transmembrane segment spans residues 145 to 165 (GTAGAFPVSLYGLSGMVFSYL). At 166 to 175 (CSKLFGENIE) the chain is on the cytoplasmic side. Residues 176-196 (HVFIFLMVACGCMILVGYFSL) form a helical membrane-spanning segment. Over 197-323 (DIFSNAEGDD…LKSSTFIGYY (127 aa)) the chain is Extracellular. At S237 the chain carries Phosphoserine. Residues 275-300 (LLSPSSPHTKYDFEDENTSKNTVGEN) form a disordered region. A helical transmembrane segment spans residues 324 to 344 (IVLGILQGVGLMYIYSVGFMV). Residues 345 to 398 (QAQVSTPPLNQLPINAEKIQSLQVTLLSLLSFCGRLSSGPISDFLVKKFKAQRL) lie on the Cytoplasmic side of the membrane. The chain crosses the membrane as a helical span at residues 399–419 (WNIVIASLLVFLASNKISHDF). Topologically, residues 420–437 (SSIEDPSLRASKSFKNIS) are extracellular. A helical transmembrane segment spans residues 438 to 458 (VCSAIFGYSFGVLFGTFPSIV). Residues 459–469 (ADRFGTNGYST) lie on the Cytoplasmic side of the membrane. The chain crosses the membrane as a helical span at residues 470–490 (LWGVLTTGGVFSVSVFTDILG). The Extracellular segment spans residues 491-514 (RDFKANTGDDDGNCKKGVLCYSYT). Residues 515 to 535 (FMVTKYCAAFNLLFVLGIIGY) traverse the membrane as a helical segment. Over 536 to 547 (TYYRRRATANSL) the chain is Cytoplasmic.

The protein resides in the membrane. This is an uncharacterized protein from Saccharomyces cerevisiae (strain ATCC 204508 / S288c) (Baker's yeast).